A 37-amino-acid polypeptide reads, in one-letter code: MKVRSSVKPICKDCKVIRRQRVVRVICKTPKHKQRQG.

The protein belongs to the bacterial ribosomal protein bL36 family.

This is Large ribosomal subunit protein bL36 (rpmJ) from Mycoplasmoides gallisepticum (strain R(low / passage 15 / clone 2)) (Mycoplasma gallisepticum).